A 488-amino-acid polypeptide reads, in one-letter code: Germacrene A hydroxylase (488 aa).

Over 1-6 (MELSFT) the chain is Cytoplasmic. The helical; Signal-anchor for type II membrane protein transmembrane segment at 7-23 (TSIAVATIVFVLFKLAT) threads the bilayer. At 24-488 (RPKSNKKLLP…KTHLVLVPSF (465 aa)) the chain is on the lumenal side. N-linked (GlcNAc...) asparagine glycosylation is found at N255, N260, and N379. C432 serves as a coordination point for heme.

Belongs to the cytochrome P450 family. Heme is required as a cofactor.

The protein localises to the endoplasmic reticulum membrane. The catalysed reaction is (+)-(R)-germacrene A + 3 reduced [NADPH--hemoprotein reductase] + 3 O2 = germacra-1(10),4,11(13)-trien-12-oate + 3 oxidized [NADPH--hemoprotein reductase] + 4 H2O + 4 H(+). It participates in secondary metabolite biosynthesis; terpenoid biosynthesis. Involved in the biosynthesis of germacrene-derived sesquiterpene lactones. Catalyzes three consecutive oxidations of germacrene A to produce germacrene A acid. Could also catalyze the three-step oxidation of non-natural substrate amorphadiene to artemisinic acid. This Saussurea costus (Costus) protein is Germacrene A hydroxylase.